A 396-amino-acid polypeptide reads, in one-letter code: Probable sugar efflux transporter (396 aa).

12 consecutive transmembrane segments (helical) span residues 15 to 35 (VLIM…PVAM), 51 to 71 (GLMM…AMLA), 84 to 104 (LFII…FWIL), 109 to 129 (MCIA…VMRI), 137 to 157 (QALG…LPIG), 168 to 188 (VTFG…IRLL), 209 to 229 (PLLL…FTAY), 245 to 265 (NFAT…SLLF), 276 to 296 (FIVV…FSTE), 297 to 317 (TIIA…CIGL), 333 to 353 (VATA…ALFG), and 365 to 385 (IGYT…TTHL).

This sequence belongs to the major facilitator superfamily. SotB (TC 2.A.1.2) family.

It localises to the cell inner membrane. Involved in the efflux of sugars. The physiological role may be the reduction of the intracellular concentration of toxic sugars or sugar metabolites. The polypeptide is Probable sugar efflux transporter (Haemophilus influenzae (strain PittGG)).